The following is a 388-amino-acid chain: Succinate--CoA ligase [ADP-forming] subunit beta (388 aa).

Residues 9-245 (KALLKEYGMP…KSQENERELK (237 aa)) enclose the ATP-grasp domain. Residues Lys46, 53–55 (GRG), Glu100, Tyr103, and Glu108 contribute to the ATP site. Mg(2+) is bound by residues Asn200 and Asp214. Substrate contacts are provided by residues Asn265 and 322-324 (GIV).

Belongs to the succinate/malate CoA ligase beta subunit family. Heterotetramer of two alpha and two beta subunits. Mg(2+) is required as a cofactor.

It catalyses the reaction succinate + ATP + CoA = succinyl-CoA + ADP + phosphate. It carries out the reaction GTP + succinate + CoA = succinyl-CoA + GDP + phosphate. The protein operates within carbohydrate metabolism; tricarboxylic acid cycle; succinate from succinyl-CoA (ligase route): step 1/1. Functionally, succinyl-CoA synthetase functions in the citric acid cycle (TCA), coupling the hydrolysis of succinyl-CoA to the synthesis of either ATP or GTP and thus represents the only step of substrate-level phosphorylation in the TCA. The beta subunit provides nucleotide specificity of the enzyme and binds the substrate succinate, while the binding sites for coenzyme A and phosphate are found in the alpha subunit. The sequence is that of Succinate--CoA ligase [ADP-forming] subunit beta from Acinetobacter baumannii (strain SDF).